We begin with the raw amino-acid sequence, 126 residues long: Ribonuclease P protein component (126 aa).

It belongs to the RnpA family. Consists of a catalytic RNA component (M1 or rnpB) and a protein subunit.

The catalysed reaction is Endonucleolytic cleavage of RNA, removing 5'-extranucleotides from tRNA precursor.. In terms of biological role, RNaseP catalyzes the removal of the 5'-leader sequence from pre-tRNA to produce the mature 5'-terminus. It can also cleave other RNA substrates such as 4.5S RNA. The protein component plays an auxiliary but essential role in vivo by binding to the 5'-leader sequence and broadening the substrate specificity of the ribozyme. The protein is Ribonuclease P protein component of Synechococcus sp. (strain JA-3-3Ab) (Cyanobacteria bacterium Yellowstone A-Prime).